Reading from the N-terminus, the 261-residue chain is HLA class II histocompatibility antigen, DM alpha chain (261 aa).

Positions Met-1–Ala-26 are cleaved as a signal peptide. The segment at Val-27–Arg-124 is alpha-1. Topologically, residues Val-27–Cys-233 are lumenal. The N-linked (GlcNAc...) asparagine glycan is linked to Asn-41. Intrachain disulfides connect Cys-50–Cys-105 and Cys-147–Cys-202. An Ig-like C1-type domain is found at Pro-121–Ala-215. The segment at Gly-125–Trp-217 is alpha-2. The segment at Val-218 to Cys-233 is connecting peptide. Residues Gly-234–Phe-254 form a helical membrane-spanning segment. Topologically, residues Arg-255–Asp-261 are cytoplasmic.

The protein belongs to the MHC class II family. As to quaternary structure, heterodimer of an alpha chain (DMA) and a beta chain (DMB). Interacts with MHCII; this interaction mediates rapid selection of high-affinity peptides in a pH-dependent manner, with an optimum at pH 5.5.

It localises to the late endosome membrane. It is found in the lysosome membrane. Plays a critical role in catalyzing the release of class II-associated invariant chain peptide (CLIP) from newly synthesized MHC class II molecules and freeing the peptide binding site for acquisition of antigenic peptides. In B-cells, the interaction between HLA-DM and MHC class II molecules is regulated by HLA-DO. This Homo sapiens (Human) protein is HLA class II histocompatibility antigen, DM alpha chain (HLA-DMA).